A 253-amino-acid chain; its full sequence is Imidazole glycerol phosphate synthase subunit HisF (253 aa).

Active-site residues include D11 and D130.

The protein belongs to the HisA/HisF family. As to quaternary structure, heterodimer of HisH and HisF.

The protein resides in the cytoplasm. The enzyme catalyses 5-[(5-phospho-1-deoxy-D-ribulos-1-ylimino)methylamino]-1-(5-phospho-beta-D-ribosyl)imidazole-4-carboxamide + L-glutamine = D-erythro-1-(imidazol-4-yl)glycerol 3-phosphate + 5-amino-1-(5-phospho-beta-D-ribosyl)imidazole-4-carboxamide + L-glutamate + H(+). The protein operates within amino-acid biosynthesis; L-histidine biosynthesis; L-histidine from 5-phospho-alpha-D-ribose 1-diphosphate: step 5/9. IGPS catalyzes the conversion of PRFAR and glutamine to IGP, AICAR and glutamate. The HisF subunit catalyzes the cyclization activity that produces IGP and AICAR from PRFAR using the ammonia provided by the HisH subunit. The sequence is that of Imidazole glycerol phosphate synthase subunit HisF from Geobacter sulfurreducens (strain ATCC 51573 / DSM 12127 / PCA).